A 386-amino-acid polypeptide reads, in one-letter code: MKIHEYQAKEVLRKYGVVTPRGIPCFSVDEAVKAAEELGGKIWVVKAQIHAGGRGKGGGVKLGKSLDEVRTLAGQILGMQLVTHQTGPEGQKVRRLLIEEGADIKKEYYVAALTDRATQKVAMMASSEGGMDIEEVAHNTPEKIIKVFVDPLAGLTDAQAIELAKGIGVPEASIPQAVDTFKKLYTCYMETDASLAEINPLILEGNGNIKALDAKFNFDSNALFRHPEIVAYRDLDEEDADEIEASKFDLAYISLDGNIGCLVNGAGLAMATMDTIKLFGAEPANFLDVGGGATTEKVTEAFKIMLKNPKVKGILVNIFGGIMKCDTIATGVVAAAKEVNLSVPLVVRMKGTNEDLGKKILAESGLPIISADTMAEAATKIVAEVK.

Residues 9-244 enclose the ATP-grasp domain; it reads KEVLRKYGVV…LDEEDADEIE (236 aa). Residues Lys46, 53–55, Glu99, Ala102, and Glu107 each bind ATP; that span reads GRG. Mg(2+)-binding residues include Asn199 and Asp213. Substrate contacts are provided by residues Asn264 and 321-323; that span reads GIM.

Belongs to the succinate/malate CoA ligase beta subunit family. As to quaternary structure, heterotetramer of two alpha and two beta subunits. The cofactor is Mg(2+).

It catalyses the reaction succinate + ATP + CoA = succinyl-CoA + ADP + phosphate. It carries out the reaction GTP + succinate + CoA = succinyl-CoA + GDP + phosphate. Its pathway is carbohydrate metabolism; tricarboxylic acid cycle; succinate from succinyl-CoA (ligase route): step 1/1. Functionally, succinyl-CoA synthetase functions in the citric acid cycle (TCA), coupling the hydrolysis of succinyl-CoA to the synthesis of either ATP or GTP and thus represents the only step of substrate-level phosphorylation in the TCA. The beta subunit provides nucleotide specificity of the enzyme and binds the substrate succinate, while the binding sites for coenzyme A and phosphate are found in the alpha subunit. The polypeptide is Succinate--CoA ligase [ADP-forming] subunit beta (Azoarcus sp. (strain BH72)).